Here is a 242-residue protein sequence, read N- to C-terminus: Octanoyltransferase (242 aa).

The 176-residue stretch at 31 to 206 (SQTTDEIWFL…LFLKNFGYNQ (176 aa)) folds into the BPL/LPL catalytic domain. Residues 70–77 (RGGQVTYH), 137–139 (SIG), and 150–152 (GLA) contribute to the substrate site. Catalysis depends on Cys-168, which acts as the Acyl-thioester intermediate.

This sequence belongs to the LipB family.

The protein localises to the cytoplasm. The catalysed reaction is octanoyl-[ACP] + L-lysyl-[protein] = N(6)-octanoyl-L-lysyl-[protein] + holo-[ACP] + H(+). It functions in the pathway protein modification; protein lipoylation via endogenous pathway; protein N(6)-(lipoyl)lysine from octanoyl-[acyl-carrier-protein]: step 1/2. Catalyzes the transfer of endogenously produced octanoic acid from octanoyl-acyl-carrier-protein onto the lipoyl domains of lipoate-dependent enzymes. Lipoyl-ACP can also act as a substrate although octanoyl-ACP is likely to be the physiological substrate. In Coxiella burnetii (strain Dugway 5J108-111), this protein is Octanoyltransferase.